The primary structure comprises 73 residues: SIFamide-related peptide (73 aa).

An N-terminal signal peptide occupies residues 1 to 23 (MVSIRLTFALAIVAIIFAFSVDA). Phe-35 bears the Phenylalanine amide mark. Residues 39–73 (SNTMTDYEFTSRALSAICEVASETCTAWMSRQESN) constitute a propeptide that is removed on maturation.

Expressed in brain, the retrocerebral complex and in ventral, thoracic and abdominal ganglia (at protein level).

Its subcellular location is the secreted. The polypeptide is SIFamide-related peptide (Camponotus floridanus (Florida carpenter ant)).